We begin with the raw amino-acid sequence, 796 residues long: Bud site selection protein 27 (796 aa).

The stretch at 81–121 forms a coiled coil; it reads KEEAITFVDDKLKLMEDAIEQFNLKIEEAKKTLDNLNHMED. Polar residues predominate over residues 152–168; sequence VISSSVTPTTKQPSQSN. Disordered stretches follow at residues 152–197, 300–344, 421–458, 535–624, and 752–796; these read VISS…EENL, LRAQ…QVGF, EGEA…TTRS, EKEP…AKTG, and ATAS…DSKP. 2 stretches are compositionally biased toward basic and acidic residues: residues 169-197 and 306-318; these read SKKE…EENL and SQDH…DVNK. Residues 427–441 show a composition bias toward basic residues; that stretch reads SNRRTRVSRFRKDRA. The span at 535–550 shows a compositional bias: basic and acidic residues; sequence EKEPEINSKSEFETPF. Residues 551-568 show a composition bias toward basic residues; sequence KKKKLKSLQKPRSSKSMK. Acidic residues predominate over residues 579–589; that stretch reads ISDDDYDDDDD. A Phosphoserine modification is found at serine 580. Positions 601 to 610 are enriched in basic and acidic residues; that stretch reads NNTDEQDKFP.

This sequence belongs to the prefoldin subunit alpha family.

It localises to the cytoplasm. In terms of biological role, involved in gene expression controlled by TOR kinase and nutrient signaling. May also be involved in positioning the proximal bud pole signal. This is Bud site selection protein 27 (BUD27) from Saccharomyces cerevisiae (strain ATCC 204508 / S288c) (Baker's yeast).